The following is a 210-amino-acid chain: NADH dehydrogenase [ubiquinone] iron-sulfur protein 8, mitochondrial (210 aa).

Residues methionine 1–alanine 34 constitute a mitochondrion transit peptide. 2 consecutive 4Fe-4S ferredoxin-type domains span residues arginine 102 to glutamate 131 and threonine 141 to asparagine 170. 8 residues coordinate [4Fe-4S] cluster: cysteine 111, cysteine 114, cysteine 117, cysteine 121, cysteine 150, cysteine 153, cysteine 156, and cysteine 160.

This sequence belongs to the complex I 23 kDa subunit family. In terms of assembly, core subunit of respiratory chain NADH dehydrogenase (Complex I) which is composed of 45 different subunits. This is a component of the iron-sulfur (IP) fragment of the enzyme. Interacts with RAB5IF. Requires [4Fe-4S] cluster as cofactor. Expressed in all tissues with the highest level in heart and skeletal muscle and the lowest level in lung.

Its subcellular location is the mitochondrion inner membrane. The enzyme catalyses a ubiquinone + NADH + 5 H(+)(in) = a ubiquinol + NAD(+) + 4 H(+)(out). In terms of biological role, core subunit of the mitochondrial membrane respiratory chain NADH dehydrogenase (Complex I) which catalyzes electron transfer from NADH through the respiratory chain, using ubiquinone as an electron acceptor. Essential for the catalytic activity and assembly of complex I. The polypeptide is NADH dehydrogenase [ubiquinone] iron-sulfur protein 8, mitochondrial (NDUFS8) (Homo sapiens (Human)).